The primary structure comprises 1260 residues: Myosin-1 (1260 aa).

A Myosin motor domain is found at 34–713; the sequence is VGVSDLTLLS…TLFALEHMRD (680 aa). Residue 127 to 134 participates in ATP binding; sequence GESGAGKT. Ser-355 is subject to Phosphoserine. The tract at residues 402 to 484 is actin-binding; the sequence is SIGILDIYGF…PGIFATLDDS (83 aa). 2 consecutive IQ domains span residues 717-737 and 738-763; these read YNMA…RIDS and AIKI…YGHR. The 191-residue stretch at 769 to 959 folds into the TH1 domain; that stretch reads KERRAMSLLG…TISVRQGRPA (191 aa). 2 stretches are compositionally biased toward polar residues: residues 948–963 and 972–988; these read SSTI…NSRQ and TLLS…SKGY. The segment at 948–1106 is disordered; the sequence is SSTISVRQGR…PPPPTKQNIP (159 aa). Low complexity predominate over residues 989-1013; it reads GQQQHAQPSYGQQQQQQQRYAPQSH. Residues 1030-1064 show a composition bias toward polar residues; it reads QQNFAASAAQTAYHPQQASHARVPSTNNAHTQHNR. The segment covering 1065–1082 has biased composition (low complexity); it reads QPAQQAAQPVQQAAQPAA. Residues 1092-1101 are compositionally biased toward pro residues; sequence APPPPPPPPT. The region spanning 1103 to 1165 is the SH3 domain; that stretch reads QNIPKFQAAY…PTNYIVEYKE (63 aa).

This sequence belongs to the TRAFAC class myosin-kinesin ATPase superfamily. Myosin family. Post-translationally, phosphorylation of the TEDS site (Ser-355) is required for the polarization of the actin cytoskeleton. Phosphorylation probably activates the myosin-I ATPase activity.

It localises to the cytoplasm. The protein localises to the cytoskeleton. It is found in the actin patch. Type-I myosin implicated in the organization of the actin cytoskeleton. Required for proper actin cytoskeleton polarization. At the cell cortex, assembles in patch-like structures together with proteins from the actin-polymerizing machinery and promotes actin assembly. Functions as actin nucleation-promoting factor (NPF) for the Arp2/3 complex. This chain is Myosin-1 (MYO1), found in Kluyveromyces lactis (strain ATCC 8585 / CBS 2359 / DSM 70799 / NBRC 1267 / NRRL Y-1140 / WM37) (Yeast).